The sequence spans 498 residues: Phosphatidylserine synthase (498 aa).

A disordered region spans residues Met1–Arg65. Residues Met1–Tyr92 are Cytoplasmic-facing. The segment covering Ser7–Ser25 has biased composition (polar residues). Residues Lys93–Val113 form a helical membrane-spanning segment. Residues Arg114–Asn122 lie on the Lumenal side of the membrane. The helical transmembrane segment at Leu123 to Pro143 threads the bilayer. The Cytoplasmic segment spans residues Asn144–Ala153. The chain crosses the membrane as a helical span at residues Val154–Phe174. The Lumenal portion of the chain corresponds to Gln175 to Met239. A glycan (N-linked (GlcNAc...) asparagine) is linked at Asn205. A helical transmembrane segment spans residues Gly240–Leu260. At Pro261–Cys266 the chain is on the cytoplasmic side. A helical membrane pass occupies residues Trp267–Leu287. At Lys288–Arg339 the chain is on the lumenal side. Residues Phe340 to Leu360 form a helical membrane-spanning segment. Topologically, residues Lys361–Pro367 are cytoplasmic. The chain crosses the membrane as a helical span at residues Pro368 to Val388. Residues Arg389–Arg402 are Lumenal-facing. The chain crosses the membrane as a helical span at residues Val403–Lys423. Topologically, residues Asn424 to Asn436 are cytoplasmic. A helical membrane pass occupies residues Ile437–Tyr457. At Trp458 to Lys498 the chain is on the lumenal side. The tract at residues Lys465 to Lys498 is disordered. The segment covering Pro478 to Ser490 has biased composition (low complexity).

Belongs to the phosphatidyl serine synthase family.

The protein localises to the endoplasmic reticulum membrane. It carries out the reaction a 1,2-diacyl-sn-glycero-3-phosphoethanolamine + L-serine = a 1,2-diacyl-sn-glycero-3-phospho-L-serine + ethanolamine. Its pathway is phospholipid metabolism; phosphatidylserine biosynthesis. In terms of biological role, catalyzes a base-exchange reaction in which the polar head group of phosphatidylethanolamine (PE) is replaced by L-serine. This Drosophila melanogaster (Fruit fly) protein is Phosphatidylserine synthase.